The sequence spans 935 residues: Peptidyl-glycine alpha-amidating monooxygenase A (935 aa).

The first 36 residues, 1–36 (MASLSSSFLVLFLLFQNSCYCFRSPLSVFKRYEEST), serve as a signal peptide directing secretion. The peptidylglycine alpha-hydroxylating monooxygenase stretch occupies residues 1–390 (MASLSSSFLV…KREEEEVLDQ (390 aa)). Topologically, residues 37–825 (RSLSNDCLGT…VQESSAGVSF (789 aa)) are intragranular. Cystine bridges form between Cys-43/Cys-182, Cys-77/Cys-122, Cys-110/Cys-127, Cys-223/Cys-330, and Cys-289/Cys-311. Cu(2+) is bound by residues His-103 and His-104. Residues His-168, His-238, His-240, and Met-310 each contribute to the Cu(2+) site. Residues 362–385 (HGHHHTEAEPEKNTGLQQPKREEE) form a disordered region. The segment at 391 to 712 (DVHLEEDTDW…SPSKAEHRSV (322 aa)) is peptidyl-alpha-hydroxyglycine alpha-amidating lyase. Arg-426 lines the a protein pocket. NHL repeat units follow at residues 463-504 (SKVL…LGAG), 512-557 (LGRA…FSPN), and 565-609 (GEET…FHAE). Disulfide bonds link Cys-526–Cys-547 and Cys-594–Cys-605. Residues Tyr-546 and Arg-598 each contribute to the a protein site. Asn-658 carries N-linked (GlcNAc...) asparagine glycosylation. Residues 662-705 (GDILDTFIPARKNFDMPHDIAAADDGTVYVGDAHANAVWKFSPS) form an NHL 4 repeat. A compositionally biased stretch (basic and acidic residues) spans 728–751 (FETHIRSRPKTNESVEKQTQEKQQ). 2 disordered regions span residues 728–764 (FETHIRSRPKTNESVEKQTQEKQQKQKNSAGVSTQEK) and 778–812 (QEKQNVVQESSAGVPTQEKQSVVQESSAGVSTQEK). Asn-739 carries an N-linked (GlcNAc...) asparagine glycan. Residues 755 to 764 (NSAGVSTQEK) show a composition bias toward polar residues. Residues 826–846 (VLIITLLIIPIAVLIAIAIFI) form a helical membrane-spanning segment. Residues 847-935 (RWRKVRMYGG…PIPPAPVSSS (89 aa)) are Cytoplasmic-facing. A disordered region spans residues 896 to 935 (KGFDRLSTEGSDQEKDDDDGSDSEEEYSAPPIPPAPVSSS). The span at 909-922 (EKDDDDGSDSEEEY) shows a compositional bias: acidic residues. Residues 925–935 (PPIPPAPVSSS) show a composition bias toward pro residues.

In the C-terminal section; belongs to the peptidyl-alpha-hydroxyglycine alpha-amidating lyase family. The protein in the N-terminal section; belongs to the copper type II ascorbate-dependent monooxygenase family. Monomer. Zn(2+) serves as cofactor. It depends on Cu(2+) as a cofactor.

It is found in the cytoplasmic vesicle. It localises to the secretory vesicle membrane. The enzyme catalyses a [peptide]-C-terminal glycine + 2 L-ascorbate + O2 = a [peptide]-C-terminal (2S)-2-hydroxyglycine + 2 monodehydro-L-ascorbate radical + H2O. It carries out the reaction a [peptide]-C-terminal (2S)-2-hydroxyglycine = a [peptide]-C-terminal amide + glyoxylate. Bifunctional enzyme that catalyzes amidation of the C-terminus of proteins. Alpha-amidation is present at the C-terminus of many endocrine hormones and neuropeptides and is required for their activity. C-terminal amidation also takes place in response to protein fragmentation triggered by oxidative stress, promoting degradation of amidated protein fragments by the proteasome. Alpha-amidation involves two sequential reactions, both of which are catalyzed by separate catalytic domains of the enzyme. The first step, catalyzed by peptidyl alpha-hydroxylating monooxygenase (PHM) domain, is the copper-, ascorbate-, and O2- dependent stereospecific hydroxylation (with S stereochemistry) at the alpha-carbon (C-alpha) of the C-terminal glycine of the peptidylglycine substrate. The second step, catalyzed by the peptidylglycine amidoglycolate lyase (PAL) domain, is the zinc-dependent cleavage of the N-C-alpha bond, producing the alpha-amidated peptide and glyoxylate. In Xenopus laevis (African clawed frog), this protein is Peptidyl-glycine alpha-amidating monooxygenase A (pam-a).